A 408-amino-acid chain; its full sequence is Peptidase T (408 aa).

H78 contributes to the Zn(2+) binding site. The active site involves D80. D141 contacts Zn(2+). E175 acts as the Proton acceptor in catalysis. Zn(2+) is bound by residues E176, D198, and H380.

It belongs to the peptidase M20B family. Requires Zn(2+) as cofactor.

It localises to the cytoplasm. It catalyses the reaction Release of the N-terminal residue from a tripeptide.. Functionally, cleaves the N-terminal amino acid of tripeptides. This chain is Peptidase T, found in Clostridium botulinum (strain Okra / Type B1).